The primary structure comprises 455 residues: ATP-dependent protease ATPase subunit HslU (455 aa).

ATP is bound by residues Val23, 65-70 (GVGKTE), Asp266, Glu333, and Arg405.

Belongs to the ClpX chaperone family. HslU subfamily. In terms of assembly, a double ring-shaped homohexamer of HslV is capped on each side by a ring-shaped HslU homohexamer. The assembly of the HslU/HslV complex is dependent on binding of ATP.

It localises to the cytoplasm. ATPase subunit of a proteasome-like degradation complex; this subunit has chaperone activity. The binding of ATP and its subsequent hydrolysis by HslU are essential for unfolding of protein substrates subsequently hydrolyzed by HslV. HslU recognizes the N-terminal part of its protein substrates and unfolds these before they are guided to HslV for hydrolysis. In Xanthomonas campestris pv. campestris (strain 8004), this protein is ATP-dependent protease ATPase subunit HslU.